We begin with the raw amino-acid sequence, 363 residues long: Chorismate synthase (363 aa).

Residue Arg-47 coordinates NADP(+). FMN-binding positions include 124 to 126 (RSS), Gly-285, 300 to 304 (KPTAT), and Arg-326.

It belongs to the chorismate synthase family. As to quaternary structure, homotetramer. It depends on FMNH2 as a cofactor.

The catalysed reaction is 5-O-(1-carboxyvinyl)-3-phosphoshikimate = chorismate + phosphate. It functions in the pathway metabolic intermediate biosynthesis; chorismate biosynthesis; chorismate from D-erythrose 4-phosphate and phosphoenolpyruvate: step 7/7. Its function is as follows. Catalyzes the anti-1,4-elimination of the C-3 phosphate and the C-6 proR hydrogen from 5-enolpyruvylshikimate-3-phosphate (EPSP) to yield chorismate, which is the branch point compound that serves as the starting substrate for the three terminal pathways of aromatic amino acid biosynthesis. This reaction introduces a second double bond into the aromatic ring system. The sequence is that of Chorismate synthase from Opitutus terrae (strain DSM 11246 / JCM 15787 / PB90-1).